The chain runs to 194 residues: Holliday junction branch migration complex subunit RuvA (194 aa).

The segment at 1-63 is domain I; sequence MFEYMKGMIV…EDEAHLYGFV (63 aa). Residues 64 to 142 form a domain II region; sequence DKEELAMFKK…DSQVEYDQNF (79 aa). Residues 143-146 form a flexible linker region; sequence FNHE. Residues 146-194 form a domain III region; sequence ENKNNNEVVDALMALGYTKHEGEQAASAVRDTSLSTEEMIRKALNWLAR.

This sequence belongs to the RuvA family. In terms of assembly, homotetramer. Forms an RuvA(8)-RuvB(12)-Holliday junction (HJ) complex. HJ DNA is sandwiched between 2 RuvA tetramers; dsDNA enters through RuvA and exits via RuvB. An RuvB hexamer assembles on each DNA strand where it exits the tetramer. Each RuvB hexamer is contacted by two RuvA subunits (via domain III) on 2 adjacent RuvB subunits; this complex drives branch migration. In the full resolvosome a probable DNA-RuvA(4)-RuvB(12)-RuvC(2) complex forms which resolves the HJ.

The protein resides in the cytoplasm. The RuvA-RuvB-RuvC complex processes Holliday junction (HJ) DNA during genetic recombination and DNA repair, while the RuvA-RuvB complex plays an important role in the rescue of blocked DNA replication forks via replication fork reversal (RFR). RuvA specifically binds to HJ cruciform DNA, conferring on it an open structure. The RuvB hexamer acts as an ATP-dependent pump, pulling dsDNA into and through the RuvAB complex. HJ branch migration allows RuvC to scan DNA until it finds its consensus sequence, where it cleaves and resolves the cruciform DNA. This is Holliday junction branch migration complex subunit RuvA from Alkaliphilus metalliredigens (strain QYMF).